A 318-amino-acid chain; its full sequence is Transaldolase (318 aa).

The Schiff-base intermediate with substrate role is filled by lysine 131.

Belongs to the transaldolase family. Type 1 subfamily. As to quaternary structure, homodimer.

The protein localises to the cytoplasm. The catalysed reaction is D-sedoheptulose 7-phosphate + D-glyceraldehyde 3-phosphate = D-erythrose 4-phosphate + beta-D-fructose 6-phosphate. The protein operates within carbohydrate degradation; pentose phosphate pathway; D-glyceraldehyde 3-phosphate and beta-D-fructose 6-phosphate from D-ribose 5-phosphate and D-xylulose 5-phosphate (non-oxidative stage): step 2/3. Its function is as follows. Transaldolase is important for the balance of metabolites in the pentose-phosphate pathway. In Buchnera aphidicola subsp. Cinara cedri (strain Cc), this protein is Transaldolase.